A 346-amino-acid polypeptide reads, in one-letter code: Transcription factor 19 (346 aa).

The 58-residue stretch at 31–88 (YRLGCRADLCDVALRPQQEPGFISEVHAELHAERRGDDWRVSLEDHSSQGTLVNNVRL) folds into the FHA domain. Ser78 carries the post-translational modification Phosphoserine. Disordered stretches follow at residues 136 to 168 (PRSRGEEGETRAGFRPMLPSQGAPQRPLSTLSP) and 190 to 289 (LTFS…AAGG). Positions 138 to 147 (SRGEEGETRA) are enriched in basic and acidic residues. Positions 190–208 (LTFSRSGSGPQNPPVSTTP) are enriched in polar residues. The span at 250 to 260 (EPRKKLLRVEK) shows a compositional bias: basic and acidic residues. The PHD-type zinc-finger motif lies at 294 to 343 (AAPCCCLPQEETVAWVQCDGCDTWFHVACVGCSIQAAKEADFRCPGCRVG). Positions 297, 299, 311, 314, 319, 322, 337, and 340 each coordinate Zn(2+).

It localises to the nucleus. Potential transcription factor that may play a role in the regulation of genes involved in cell cycle G1/S transition. May bind to regulatory elements of genes, including the promoter of the transcription factor FOXO1. This chain is Transcription factor 19 (TCF19), found in Sus scrofa (Pig).